The primary structure comprises 207 residues: ATP-dependent Clp protease proteolytic subunit (207 aa).

The Nucleophile role is filled by S111. The active site involves H136.

It belongs to the peptidase S14 family. As to quaternary structure, fourteen ClpP subunits assemble into 2 heptameric rings which stack back to back to give a disk-like structure with a central cavity, resembling the structure of eukaryotic proteasomes.

It localises to the cytoplasm. The catalysed reaction is Hydrolysis of proteins to small peptides in the presence of ATP and magnesium. alpha-casein is the usual test substrate. In the absence of ATP, only oligopeptides shorter than five residues are hydrolyzed (such as succinyl-Leu-Tyr-|-NHMec, and Leu-Tyr-Leu-|-Tyr-Trp, in which cleavage of the -Tyr-|-Leu- and -Tyr-|-Trp bonds also occurs).. Its function is as follows. Cleaves peptides in various proteins in a process that requires ATP hydrolysis. Has a chymotrypsin-like activity. Plays a major role in the degradation of misfolded proteins. This is ATP-dependent Clp protease proteolytic subunit from Psychromonas ingrahamii (strain DSM 17664 / CCUG 51855 / 37).